A 180-amino-acid polypeptide reads, in one-letter code: D(1A) dopamine receptor (180 aa).

The helical transmembrane segment at 1-10 threads the bilayer; that stretch reads NTLLVCAAVI. Over 11–21 the chain is Cytoplasmic; the sequence is RFRHLRSKVTN. Residues 22–48 form a helical membrane-spanning segment; the sequence is FFVISLAVSDLLVAVLVMPWKAVAEIA. Residues 49–57 are Extracellular-facing; sequence GFWPFGSFC. Cysteines 57 and 147 form a disulfide. A helical transmembrane segment spans residues 58–80; that stretch reads NIWVAFDIMCSTASILNLCVISV. Topologically, residues 81-99 are cytoplasmic; sequence DRYWAISSPFRYERKMTPK. The chain crosses the membrane as a helical span at residues 100–124; that stretch reads AAFILIGVAWTLSVLISFIPVQLSW. Topologically, residues 125–153 are extracellular; that stretch reads HKAKPTSPPDGNATSLDETVDNCDSSLSR. Asn-136 carries an N-linked (GlcNAc...) asparagine glycan. A helical transmembrane segment spans residues 154 to 179; that stretch reads TYSISSSLVNFYNPVAIMXVTYTRIH. A topological domain (cytoplasmic) is located at residue Arg-180.

Belongs to the G-protein coupled receptor 1 family. Interacts with DNAJC14 via its C-terminus. Interacts with DRD2. Interacts with DORIP1.

The protein resides in the cell membrane. Its subcellular location is the endoplasmic reticulum membrane. It localises to the cell projection. The protein localises to the cilium membrane. Dopamine receptor whose activity is mediated by G proteins which activate adenylyl cyclase. The chain is D(1A) dopamine receptor (DRD1) from Oryctolagus cuniculus (Rabbit).